A 1612-amino-acid chain; its full sequence is Phospholipid-transporting ATPase DNF2 (1612 aa).

The interval 1–74 (MSSPSKPTSP…MKDISTPDLS (74 aa)) is disordered. Over 1–252 (MSSPSKPTSP…TFFPKNILFQ (252 aa)) the chain is Cytoplasmic. The segment covering 20–30 (GSASNGLSSMS) has biased composition (low complexity). Threonine 70 bears the Phosphothreonine mark. A Phosphoserine modification is found at serine 85. A helical membrane pass occupies residues 253-273 (FHNFANIYFLILLILGAFQIF). Positions 272–279 (IFGVTNPG) are involved in phosphatidylcholine substrate selection. Residues 274–277 (GVTN) lie on the Extracellular side of the membrane. The helical transmembrane segment at 278-298 (PGFASVPLIVIVIITAIKDGI) threads the bilayer. The Cytoplasmic segment spans residues 299–598 (EDSRRTVLDL…RISRELNFSV (300 aa)). Residues 364-373 (KLQKKREELR) are compositionally biased toward basic and acidic residues. The segment at 364–384 (KLQKKREELRRKRNSRSFGPR) is disordered. A phosphoserine mark is found at serine 389, serine 392, serine 396, and serine 403. A Phosphotyrosine modification is found at tyrosine 406. Residues 599–619 (ILNFVLLFILCFTAGIVNGVY) form a helical membrane-spanning segment. The Extracellular segment spans residues 620–639 (YKQKPRSRDYFEFGTIGGSA). The tract at residues 631 to 635 (EFGTI) is involved in phosphatidylcholine substrate selection. Residues 640-660 (STNGFVSFWVAVILYQSLVPI) form a helical membrane-spanning segment. At 661-1231 (SLYISVEIIK…WCYKRLAEMI (571 aa)) the chain is on the cytoplasmic side. Catalysis depends on aspartate 712, which acts as the 4-aspartylphosphate intermediate. ATP-binding residues include aspartate 712, lysine 713, and threonine 714. Position 712 (aspartate 712) interacts with Mg(2+). Threonine 714 contacts Mg(2+). Threonine 782 bears the Phosphothreonine mark. The ATP site is built by glutamate 846, phenylalanine 887, serine 889, lysine 892, and lysine 916. Residue lysine 938 forms a Glycyl lysine isopeptide (Lys-Gly) (interchain with G-Cter in ubiquitin) linkage. ATP-binding residues include arginine 952, threonine 953, threonine 1032, glycine 1033, aspartate 1034, arginine 1147, and lysine 1153. Mg(2+) is bound at residue aspartate 1173. Positions 1176 and 1177 each coordinate ATP. A Mg(2+)-binding site is contributed by aspartate 1177. Residues 1232–1252 (PQFFYKNVIFTLSLFWYGIYN) traverse the membrane as a helical segment. Residues 1253–1262 (NFDGSYLFEY) lie on the Extracellular side of the membrane. The helical transmembrane segment at 1263–1283 (TYLTFYNLAFTSVPVILLAVL) threads the bilayer. Residues 1284 to 1313 (DQDVSDTVSMLVPQLYRVGILRKEWNQTKF) lie on the Cytoplasmic side of the membrane. The helical transmembrane segment at 1314 to 1334 (LWYMLDGVYQSVICFFFPYLA) threads the bilayer. Residues 1335–1350 (YHKNMVVTENGLGLDH) are Extracellular-facing. Residues 1351–1371 (RYFVGVFVTAIAVTSCNFYVF) traverse the membrane as a helical segment. Topologically, residues 1372 to 1377 (MEQYRW) are cytoplasmic. A helical membrane pass occupies residues 1378-1398 (DWFCGLFICLSLAVFYGWTGI). The Extracellular portion of the chain corresponds to 1399-1418 (WTSSSSSNEFYKGAARVFAQ). A helical transmembrane segment spans residues 1419–1439 (PAYWAVLFVGVLFCLLPRFTI). Arginine 1436 serves as a coordination point for a 1,2-diacyl-sn-glycero-3-phospho-L-serine. The Cytoplasmic segment spans residues 1440–1612 (DCIRKIFYPK…TLLSQRSRDR (173 aa)). Serine 1542 is subject to Phosphoserine. Residues 1544 to 1563 (VTTTNNLPRRSMASARGNKL) form a disordered region. Residue serine 1592 is modified to Phosphoserine.

The protein belongs to the cation transport ATPase (P-type) (TC 3.A.3) family. Type IV subfamily. As to quaternary structure, component of a flippase complex consisting of DNF1 and LEM3. Interacts with LEM3; the interaction is direct. It depends on Mg(2+) as a cofactor. In terms of processing, phosphorylated by FPK1 and KIN82.

The protein localises to the cell membrane. It catalyses the reaction ATP + H2O + phospholipidSide 1 = ADP + phosphate + phospholipidSide 2.. It carries out the reaction a 1,2-diacyl-sn-glycero-3-phosphoethanolamine(out) + ATP + H2O = a 1,2-diacyl-sn-glycero-3-phosphoethanolamine(in) + ADP + phosphate + H(+). The enzyme catalyses a 1,2-diacyl-sn-glycero-3-phosphocholine(out) + ATP + H2O = a 1,2-diacyl-sn-glycero-3-phosphocholine(in) + ADP + phosphate + H(+). The catalysed reaction is a beta-D-glucosyl-(1&lt;-&gt;1')-N-acylsphing-4-enine(out) + ATP + H2O = a beta-D-glucosyl-(1&lt;-&gt;1')-N-acylsphing-4-enine(in) + ADP + phosphate + H(+). It catalyses the reaction a 1,2-diacyl-sn-glycero-3-phospho-L-serine(out) + ATP + H2O = a 1,2-diacyl-sn-glycero-3-phospho-L-serine(in) + ADP + phosphate + H(+). Phosphatidylcholine flippase activity is inhibited by glucosylsphingosine, lactosylsphingosine, lysophosphatidylcholine and to a lesser degree sphingosine-1-phosphate and lysosphingomyelin. Glucosylceramide flippase activity is inhibited by lysophosphatidylcholine, glucosylsphingosine and to a lesser degree lactosylsphingosine whereas lysosphingomyelin has a stimulatory effect at low concentrations. In terms of biological role, catalytic component of a P4-ATPase flippase complex which catalyzes the hydrolysis of ATP coupled to the transport of glucosylceramide, phosphatidylcholine, phosphatidylethanolamine, and small amounts of phosphatidylserine from the lumenal to the cytosolic leaflet of the cell membrane and ensures the maintenance of asymmetric distribution of phospholipids. Does not appear to transport sphingomyelin, inositol phosphoceramide or phosphatidic acid. Required for efficient endocytosis. Required for protein transport from Golgi to vacuoles. In Saccharomyces cerevisiae (strain ATCC 204508 / S288c) (Baker's yeast), this protein is Phospholipid-transporting ATPase DNF2 (DNF2).